The sequence spans 569 residues: Melanophilin (569 aa).

A RabBD domain is found at 4–124; sequence KLDLSKLTDD…MGSLEWYYGH (121 aa). The FYVE-type zinc finger occupies 58-112; that stretch reads HLNETHCARCLQPYRLLVAPKRQCLDCHLFTCQDCSHAHPEEEGWLCDPCHLARV. The segment at 143–430 is disordered; it reads GRLQGGGGPE…MQPGRTTDQE (288 aa). Basic and acidic residues-rich tracts occupy residues 352 to 362 and 379 to 390; these read ETLKRKLEEMT and EEEAGLNRKTSI. Over residues 404–415 the composition is skewed to polar residues; that stretch reads SGQTSRQETSPR. Residues 431–465 are a coiled coil; that stretch reads LLELEDRVAVTASEVQQVESEVSNIKSKIAALQAA. The segment at 490-569 is disordered; the sequence is GRLGQTPKDP…FAKPVMTQRP (80 aa). Residues 526 to 535 show a composition bias toward basic and acidic residues; the sequence is SQDKAGDSFD.

Binds RAB27A that has been activated by GTP-binding via its N-terminus. Binds MYO5A via its C-terminal coiled coil domain.

It is found in the melanosome. In terms of biological role, rab effector protein involved in melanosome transport. Serves as link between melanosome-bound RAB27A and the motor protein MYO5A. This is Melanophilin (MLPH) from Felis catus (Cat).